The sequence spans 807 residues: MPASEDRRGKWKRKKRGGLSAARKPKQEEEDMEEEDEENNNNNNEEMDDVENADELQQNGGATPDPGLGIGEVVEDSGSRISDFPAVVKRVVIRPHASVMAVVAAERAGLIGETRGQGSLPALENISFGQLQALSTVPADSLDLERSDGSSSAYVISPPPIMDGEGVVKRFGDLVHVLPMHSDWFAPNTVDRLERQVVPQFFSGKSPNHTPESYMEFRNAIVSKYVENPEKTLTISDCQGLVDGVDIEDFARVFRFLDHWGIINYCATAQSHPGPLRDVSDVREDTNGEVNVPSAALTSIDSLIKFDKPNCRHKGGEVYSSLPSLDGDSPDLDIRIREHLCDSHCNHCSRPLPTVYFQSQKKGDILLCCDCFHHGRFVVGHSCLDFVRVDPMKFYGDQDGDNWTDQETLLLLEAVELYNENWVQIADHVGSKSKAQCILHFLRLPVEDGLLDNVEVSGVTNTENPTNGYDHKGTDSNGDLPGYSEQGSDTEIKLPFVKSPNPVMALVAFLASAVGPRVAASCAHESLSVLSEDDRMKSEGMQGKEASLLDGENQQQDGAHKTSSQNGAEAQTPLPQDKVMAAFRAGLSAAATKAKLFADHEEREIQRLSANIVNHQLKRMELKLKQFAEIETLLMKECEQVEKTRQRFSAERARMLSARFGSPGGISPQTNNLQGMSLSTGGNNINSLMHQQHQQQQASATSQPSIIPGFSNNPQVQAQMHFMARQQQQQQQQQQQQQQAFSFGPRLPLNAIQTNAGSTASPNVMFGNNQLNNPAAAGAASINQPSFSHPMVRSSTGSGSGSGLGLN.

The disordered stretch occupies residues Met-1–Val-74. A compositionally biased stretch (acidic residues) spans Glu-28–Asp-54. In terms of domain architecture, SWIRM spans His-176 to Gly-274. The ZZ-type; degenerate zinc finger occupies Leu-340–Phe-394. The Zn(2+) site is built by Cys-345, Cys-348, Cys-368, and Cys-371. Residues Gln-398–Gly-449 enclose the SANT domain. Composition is skewed to polar residues over residues Gly-458 to Asn-467 and Glu-552 to Glu-569. Disordered stretches follow at residues Gly-458–Gly-487 and Leu-549–Gln-571. Positions Ala-598 to Leu-656 form a coiled coil. Composition is skewed to low complexity over residues Gln-692–Gln-703 and Gln-726–Gln-739. Disordered regions lie at residues Gln-692–Asn-713, His-721–Ala-740, and Ser-781–Asn-807. Residues Ser-798–Asn-807 are compositionally biased toward gly residues.

As to quaternary structure, heterodimer. Interacts with SWI3A, SWI3B and BRM, but not with BSH. Interacts with MORC6 and SUVH9. In terms of tissue distribution, expressed in roots, stems, leaves, flowers and siliques.

It localises to the nucleus. In terms of biological role, component of a multiprotein complex equivalent of the SWI/SNF complex, an ATP-dependent chromatin-remodeling complex, which is required for the positive and negative regulation of gene expression of a large number of genes. It changes chromatin structure by altering DNA-histone contacts within a nucleosome, leading eventually to a change in nucleosome position, thus facilitating or repressing binding of gene-specific transcription factors. The protein is SWI/SNF complex subunit SWI3C (SWI3C) of Arabidopsis thaliana (Mouse-ear cress).